A 113-amino-acid chain; its full sequence is Ribosome-binding factor A (113 aa).

It belongs to the RbfA family. In terms of assembly, monomer. Binds 30S ribosomal subunits, but not 50S ribosomal subunits or 70S ribosomes.

It is found in the cytoplasm. Its function is as follows. One of several proteins that assist in the late maturation steps of the functional core of the 30S ribosomal subunit. Associates with free 30S ribosomal subunits (but not with 30S subunits that are part of 70S ribosomes or polysomes). Required for efficient processing of 16S rRNA. May interact with the 5'-terminal helix region of 16S rRNA. The protein is Ribosome-binding factor A of Mycoplasmopsis agalactiae (strain NCTC 10123 / CIP 59.7 / PG2) (Mycoplasma agalactiae).